Consider the following 263-residue polypeptide: Aquaporin Lacbi1:233199 (263 aa).

Topologically, residues 1 to 17 are cytoplasmic; sequence MFTLAHHRHAIRKPMAE. Residues 18 to 38 form a helical membrane-spanning segment; the sequence is FFGVALLVIFGAGAACQVVLS. Topologically, residues 39 to 44 are extracellular; the sequence is TNPNSF. The chain crosses the membrane as a helical span at residues 45-65; sequence LSINFGWAIGIAMGAWISGSI. Over 66–88 the chain is Cytoplasmic; the sequence is SGGHINPAITIAMATYRGFPWRE. The short motif at 71–73 is the NPA 1 element; that stretch reads NPA. Residues 89–109 traverse the membrane as a helical segment; the sequence is VPSYILAQVLGGVVGAALVYA. Topologically, residues 110–143 are extracellular; the sequence is NYIHAIDVFEGGRHIRTQATASLFATYALPYMTQ. The chain crosses the membrane as a helical span at residues 144–164; the sequence is VSCFFSEFLATAVLAMMVLAL. Residues 165–174 lie on the Cytoplasmic side of the membrane; sequence TDNRNGAPTN. A helical membrane pass occupies residues 175 to 195; it reads GLSPFALFVLFIGLGASLGME. At 196-227 the chain is on the extracellular side; the sequence is TAYALNPARDFGPRLFLAMAGYGKALFNYRSQ. The short motif at 201–203 is the NPA 2 element; sequence NPA. A helical transmembrane segment spans residues 228–248; that stretch reads YWLWAPIIAPVLGAQAGGLLY. The Cytoplasmic portion of the chain corresponds to 249-263; that stretch reads DTFLYDGDDSPIKWR.

It belongs to the MIP/aquaporin (TC 1.A.8) family.

The protein resides in the membrane. The catalysed reaction is H2O(in) = H2O(out). Its function is as follows. Probable water channel required to facilitate the transport of water across membranes. The polypeptide is Aquaporin Lacbi1:233199 (Laccaria bicolor (strain S238N-H82 / ATCC MYA-4686) (Bicoloured deceiver)).